A 620-amino-acid polypeptide reads, in one-letter code: KIF-binding protein (620 aa).

Coiled-coil stretches lie at residues 30–64 (YKSK…QDIL) and 133–169 (LIKS…QLQN).

This sequence belongs to the KIF-binding protein family.

The protein localises to the cytoplasm. It is found in the cytoskeleton. In terms of biological role, activator of KIF1B plus-end-directed microtubule motor activity. Required for organization of axonal microtubules, and axonal outgrowth and maintenance during peripheral and central nervous system development. The chain is KIF-binding protein (kifbp) from Dictyostelium discoideum (Social amoeba).